Reading from the N-terminus, the 704-residue chain is Elongation factor G (704 aa).

The tr-type G domain maps to 8–290 (ARYRNIGISA…AVIDYLPSPV (283 aa)). Residues 17-24 (AHIDAGKT), 88-92 (DTPGH), and 142-145 (NKMD) each bind GTP. Lys504 and Lys643 each carry N6-acetyllysine.

This sequence belongs to the TRAFAC class translation factor GTPase superfamily. Classic translation factor GTPase family. EF-G/EF-2 subfamily.

It is found in the cytoplasm. Its function is as follows. Catalyzes the GTP-dependent ribosomal translocation step during translation elongation. During this step, the ribosome changes from the pre-translocational (PRE) to the post-translocational (POST) state as the newly formed A-site-bound peptidyl-tRNA and P-site-bound deacylated tRNA move to the P and E sites, respectively. Catalyzes the coordinated movement of the two tRNA molecules, the mRNA and conformational changes in the ribosome. The chain is Elongation factor G from Escherichia coli O17:K52:H18 (strain UMN026 / ExPEC).